The chain runs to 1485 residues: Cystic fibrosis transmembrane conductance regulator (1485 aa).

Residues 1–78 (MQKTPLEKAS…KLINALKRCF (78 aa)) lie on the Cytoplasmic side of the membrane. Residues 79–99 (FWKFLFYGILLYLGEVTKAVQ) traverse the membrane as a helical segment. The 285-residue stretch at 82–366 (FLFYGILLYL…WAVQTWYDSL (285 aa)) folds into the ABC transmembrane type-1 1 domain. The Extracellular portion of the chain corresponds to 100–123 (PLLLGRIIASYDRDNEHERSIAYY). The helical transmembrane segment at 124-147 (LAIGLCLLFVVRMLLLHPAIFGLH) threads the bilayer. Over 148–196 (HIGMQMRIAMFSLIYKKTLKLSSKVLDKISTGQLVSLLSNNLNKFDEGL) the chain is Cytoplasmic. The chain crosses the membrane as a helical span at residues 197–217 (ALAHFVWIAPLQVLLLMGLLW). The Extracellular segment spans residues 218–223 (DLLQAS). The helical transmembrane segment at 224 to 244 (AFCGLGFLIILSLFQARLGRM) threads the bilayer. The Cytoplasmic portion of the chain corresponds to 245–299 (MMKYKDKRAGKINERLVITSQIIENIQSVKAYCWENAMEKIIETIRETELKLTRK). A helical transmembrane segment spans residues 300 to 320 (AAYVRYFNSSAFFFSGFFVVF). Over 321–340 (LSIVPHLLLDGISLRKIFTT) the chain is Extracellular. Residues 341–359 (ISFSIVLRMAVTRQFPWAV) traverse the membrane as a helical segment. The Cytoplasmic portion of the chain corresponds to 360–860 (QTWYDSLGVI…YLRFLTAHKN (501 aa)). Residues tryptophan 402, serine 435, 459-466 (GSTGAGKT), and glutamine 494 each bind ATP. Positions 422-647 (ISNEDPSAFF…RPEFSSHLIG (226 aa)) constitute an ABC transporter 1 domain. The interval 652–833 (NAERRNSIIT…EEINEEDLKE (182 aa)) is disordered R region. A compositionally biased stretch (polar residues) spans 750–760 (PRSNFLNTGPT). Residues 861–881 (FIFILVFCLVIFFVEVAASSA) form a helical membrane-spanning segment. The region spanning 880–1163 (SAWLWIIKRN…ASIDVDSLMR (284 aa)) is the ABC transmembrane type-1 2 domain. Residues 882–923 (WLWIIKRNAPAINMTSNENVSEVSDTLSVIVTHTSFYYVFYI) are Extracellular-facing. 2 N-linked (GlcNAc...) asparagine glycosylation sites follow: asparagine 894 and asparagine 900. Residues 924–944 (YVGVADSLLALGIFRGLPLVH) traverse the membrane as a discontinuously helical segment. At 945–995 (SLISVSKVLHKKMLHAILHAPMSTFNTMRAGRILNRFSKDTAILDDILPLS) the chain is on the cytoplasmic side. A helical membrane pass occupies residues 996-1016 (IFDLTQLVLIVIGAITVVSLL). The Extracellular segment spans residues 1017-1018 (EP). Residues 1019–1039 (YIFLATVPVIVAFILLRSYFL) traverse the membrane as a helical segment. Residues 1040 to 1100 (HTSQQLKQLE…TANWFLYLST (61 aa)) lie on the Cytoplasmic side of the membrane. The chain crosses the membrane as a helical span at residues 1101-1121 (LRWFQMTIEMIFVIFFIAVSF). At 1122–1135 (ISIATSGAGEEKVG) the chain is on the extracellular side. The chain crosses the membrane as a helical span at residues 1136–1156 (IVLTLAMNIMNTLQWAVNASI). Residues 1157-1485 (DVDSLMRSVS…TEEEVQDTRL (329 aa)) lie on the Cytoplasmic side of the membrane. An ABC transporter 2 domain is found at 1213 to 1446 (MTVKNLSANY…KSFFKQAISH (234 aa)). Residues tyrosine 1222 and 1247-1254 (GRTGSGKS) contribute to the ATP site. Positions 1458 to 1485 (RNSSKRKSRPQISALQEETEEEVQDTRL) are disordered. Over residues 1474-1485 (EETEEEVQDTRL) the composition is skewed to acidic residues. The PDZ-binding signature appears at 1483-1485 (TRL).

Belongs to the ABC transporter superfamily. ABCC family. CFTR transporter (TC 3.A.1.202) subfamily. In terms of assembly, monomer; does not require oligomerization for channel activity. May form oligomers in the membrane. Post-translationally, phosphorylated; cAMP treatment promotes phosphorylation and activates the channel. Dephosphorylation decreases the ATPase activity (in vitro). Phosphorylation at PKA sites activates the channel. Phosphorylation at PKC sites enhances the response to phosphorylation by PKA.

It localises to the apical cell membrane. Its subcellular location is the early endosome membrane. The protein localises to the cell membrane. The protein resides in the recycling endosome membrane. It is found in the endoplasmic reticulum membrane. It carries out the reaction ATP + H2O + closed Cl(-) channel = ADP + phosphate + open Cl(-) channel.. The enzyme catalyses chloride(in) = chloride(out). It catalyses the reaction hydrogencarbonate(in) = hydrogencarbonate(out). The catalysed reaction is ATP + H2O = ADP + phosphate + H(+). Its function is as follows. Epithelial ion channel that plays an important role in the regulation of epithelial ion and water transport and fluid homeostasis. Mediates the transport of chloride ions across the cell membrane. Possesses an intrinsic ATPase activity and utilizes ATP to gate its channel; the passive flow of anions through the channel is gated by cycles of ATP binding and hydrolysis by the ATP-binding domains. The ion channel is also permeable to HCO(3)(-); selectivity depends on the extracellular chloride concentration. Exerts its function also by modulating the activity of other ion channels and transporters. Contributes to the regulation of the pH and the ion content of the epithelial fluid layer. This is Cystic fibrosis transmembrane conductance regulator from Xenopus laevis (African clawed frog).